Reading from the N-terminus, the 225-residue chain is UPF0758 protein Shew185_0376 (225 aa).

Residues 102–224 enclose the MPN domain; that stretch reads VLTNPDLTRD…IVSFAERGWI (123 aa). The Zn(2+) site is built by His-173, His-175, and Asp-186. Positions 173–186 match the JAMM motif motif; that stretch reads HNHPSGNAEPSQAD.

It belongs to the UPF0758 family.

The polypeptide is UPF0758 protein Shew185_0376 (Shewanella baltica (strain OS185)).